Reading from the N-terminus, the 245-residue chain is NAD-dependent protein deacetylase (245 aa).

Residues 1 to 245 enclose the Deacetylase sirtuin-type domain; sequence MIFVQQFEEV…EFVEGLSSIK (245 aa). The NAD(+) site is built by A26, T30, F37, R38, Q105, I107, D108, and H123. F37 contacts nicotinamide. Residues I107 and D108 each coordinate nicotinamide. H123 serves as the catalytic Proton acceptor. Positions 131, 134, 151, and 154 each coordinate Zn(2+). NAD(+)-binding residues include T190, S191, N216, and I234.

The protein belongs to the sirtuin family. Class U subfamily. It depends on Zn(2+) as a cofactor.

The protein localises to the cytoplasm. The catalysed reaction is N(6)-acetyl-L-lysyl-[protein] + NAD(+) + H2O = 2''-O-acetyl-ADP-D-ribose + nicotinamide + L-lysyl-[protein]. Functionally, NAD-dependent protein deacetylase which modulates the activities of several enzymes which are inactive in their acetylated form. This chain is NAD-dependent protein deacetylase, found in Bacillus thuringiensis subsp. konkukian (strain 97-27).